The chain runs to 598 residues: Aspartate--tRNA(Asp/Asn) ligase (598 aa).

Glu175 provides a ligand contact to L-aspartate. The tract at residues 199-202 (QQFK) is aspartate. Positions 221 and 452 each coordinate L-aspartate. 221–223 (RDE) contributes to the ATP binding site. Glu486 lines the ATP pocket. L-aspartate is bound at residue Arg493. ATP is bound at residue 538 to 541 (GVDR).

The protein belongs to the class-II aminoacyl-tRNA synthetase family. Type 1 subfamily. Homodimer.

It is found in the cytoplasm. The catalysed reaction is tRNA(Asx) + L-aspartate + ATP = L-aspartyl-tRNA(Asx) + AMP + diphosphate. Aspartyl-tRNA synthetase with relaxed tRNA specificity since it is able to aspartylate not only its cognate tRNA(Asp) but also tRNA(Asn). Reaction proceeds in two steps: L-aspartate is first activated by ATP to form Asp-AMP and then transferred to the acceptor end of tRNA(Asp/Asn). The chain is Aspartate--tRNA(Asp/Asn) ligase from Gluconobacter oxydans (strain 621H) (Gluconobacter suboxydans).